Here is a 158-residue protein sequence, read N- to C-terminus: Transcription elongation factor GreA (158 aa).

Residues 3 to 75 (TEKTYPMTQE…TQLENMIRNA (73 aa)) adopt a coiled-coil conformation.

This sequence belongs to the GreA/GreB family.

In terms of biological role, necessary for efficient RNA polymerase transcription elongation past template-encoded arresting sites. The arresting sites in DNA have the property of trapping a certain fraction of elongating RNA polymerases that pass through, resulting in locked ternary complexes. Cleavage of the nascent transcript by cleavage factors such as GreA or GreB allows the resumption of elongation from the new 3'terminus. GreA releases sequences of 2 to 3 nucleotides. The sequence is that of Transcription elongation factor GreA from Bacillus cytotoxicus (strain DSM 22905 / CIP 110041 / 391-98 / NVH 391-98).